Reading from the N-terminus, the 140-residue chain is Acyl-coenzyme A thioesterase 13 (140 aa).

Met1 bears the N-acetylmethionine mark. The residue at position 2 (Thr2) is an N-acetylthreonine; in Acyl-coenzyme A thioesterase 13, N-terminally processed. Lys27, Lys37, and Lys43 each carry N6-acetyllysine. Position 46 (Glu46) interacts with CoA. Substrate-binding residues include Asn50 and Gly81. CoA is bound by residues Ser83, 90-95, and 108-113; these read YMSPAK and KQGKTL. N6-acetyllysine occurs at positions 108 and 127. His137 is a CoA binding site.

Belongs to the thioesterase PaaI family. As to quaternary structure, homotetramer. Interacts with PCTP.

The protein resides in the cytoplasm. It localises to the cytosol. The protein localises to the mitochondrion. It is found in the nucleus. Its subcellular location is the cytoskeleton. The protein resides in the spindle. It carries out the reaction a fatty acyl-CoA + H2O = a fatty acid + CoA + H(+). The catalysed reaction is decanoyl-CoA + H2O = decanoate + CoA + H(+). It catalyses the reaction octanoyl-CoA + H2O = octanoate + CoA + H(+). The enzyme catalyses butanoyl-CoA + H2O = butanoate + CoA + H(+). It carries out the reaction hexanoyl-CoA + H2O = hexanoate + CoA + H(+). The catalysed reaction is tetradecanoyl-CoA + H2O = tetradecanoate + CoA + H(+). It catalyses the reaction hexadecanoyl-CoA + H2O = hexadecanoate + CoA + H(+). The enzyme catalyses dodecanoyl-CoA + H2O = dodecanoate + CoA + H(+). It carries out the reaction (9Z)-octadecenoyl-CoA + H2O = (9Z)-octadecenoate + CoA + H(+). The catalysed reaction is (5Z,8Z,11Z,14Z)-eicosatetraenoyl-CoA + H2O = (5Z,8Z,11Z,14Z)-eicosatetraenoate + CoA + H(+). Its function is as follows. Catalyzes the hydrolysis of acyl-CoAs into free fatty acids and coenzyme A (CoASH), regulating their respective intracellular levels. Has acyl-CoA thioesterase activity towards medium (C12) and long-chain (C18) fatty acyl-CoA substrates. Can also hydrolyze 3-hydroxyphenylacetyl-CoA and 3,4-dihydroxyphenylacetyl-CoA (in vitro). May play a role in controlling adaptive thermogenesis. This Homo sapiens (Human) protein is Acyl-coenzyme A thioesterase 13.